Here is a 478-residue protein sequence, read N- to C-terminus: Glutamate--tRNA ligase 1 (478 aa).

The 'HIGH' region motif lies at 10–20; the sequence is PSPTGFLHIGG. The short motif at 242–246 is the 'KMSKS' region element; it reads KLSKR. Lys245 lines the ATP pocket.

This sequence belongs to the class-I aminoacyl-tRNA synthetase family. Glutamate--tRNA ligase type 1 subfamily. As to quaternary structure, monomer.

The protein resides in the cytoplasm. The enzyme catalyses tRNA(Glu) + L-glutamate + ATP = L-glutamyl-tRNA(Glu) + AMP + diphosphate. Catalyzes the attachment of glutamate to tRNA(Glu) in a two-step reaction: glutamate is first activated by ATP to form Glu-AMP and then transferred to the acceptor end of tRNA(Glu). This chain is Glutamate--tRNA ligase 1, found in Orientia tsutsugamushi (strain Boryong) (Rickettsia tsutsugamushi).